The sequence spans 117 residues: Large ribosomal subunit protein uL22 (117 aa).

The protein belongs to the universal ribosomal protein uL22 family. Part of the 50S ribosomal subunit.

In terms of biological role, this protein binds specifically to 23S rRNA; its binding is stimulated by other ribosomal proteins, e.g. L4, L17, and L20. It is important during the early stages of 50S assembly. It makes multiple contacts with different domains of the 23S rRNA in the assembled 50S subunit and ribosome. Its function is as follows. The globular domain of the protein is located near the polypeptide exit tunnel on the outside of the subunit, while an extended beta-hairpin is found that lines the wall of the exit tunnel in the center of the 70S ribosome. The protein is Large ribosomal subunit protein uL22 of Lactobacillus delbrueckii subsp. bulgaricus (strain ATCC 11842 / DSM 20081 / BCRC 10696 / JCM 1002 / NBRC 13953 / NCIMB 11778 / NCTC 12712 / WDCM 00102 / Lb 14).